We begin with the raw amino-acid sequence, 844 residues long: Translation initiation factor IF-2 (844 aa).

Positions 1-11 are enriched in basic and acidic residues; the sequence is MTEDVKADAPK. Disordered stretches follow at residues 1 to 48 and 79 to 249; these read MTED…VKTD and RLEA…GTAL. Residues 21-30 are compositionally biased toward low complexity; it reads TTVSSTTTGG. Basic and acidic residues predominate over residues 79–161; that stretch reads RLEAEKAATK…AAEEAKRYAE (83 aa). Over residues 162–175 the composition is skewed to acidic residues; the sequence is ADDSDNESSSEDYS. Residues 200–210 show a composition bias toward basic residues; the sequence is RGKNKVAKAKK. A compositionally biased stretch (basic and acidic residues) spans 211 to 237; it reads GGRDDENSKNSKNERESNRKNQKDAKF. The region spanning 343 to 513 is the tr-type G domain; that stretch reads TRAPVVTIMG…LLQSEVLELT (171 aa). Residues 352–359 form a G1 region; the sequence is GHVDHGKT. GTP is bound at residue 352–359; the sequence is GHVDHGKT. The G2 stretch occupies residues 377 to 381; that stretch reads GITQH. Residues 399–402 form a G3 region; sequence DTPG. GTP is bound by residues 399 to 403 and 453 to 456; these read DTPGH and NKID. Residues 453-456 are G4; it reads NKID. The segment at 489–491 is G5; that stretch reads SAK.

It belongs to the TRAFAC class translation factor GTPase superfamily. Classic translation factor GTPase family. IF-2 subfamily.

The protein resides in the cytoplasm. Its function is as follows. One of the essential components for the initiation of protein synthesis. Protects formylmethionyl-tRNA from spontaneous hydrolysis and promotes its binding to the 30S ribosomal subunits. Also involved in the hydrolysis of GTP during the formation of the 70S ribosomal complex. The protein is Translation initiation factor IF-2 of Haemophilus influenzae (strain 86-028NP).